The following is a 215-amino-acid chain: Adenylate kinase (215 aa).

Position 10–15 (10–15) interacts with ATP; sequence GAGKGT. Positions 30–59 are NMP; sequence STGDMFRAAMKNNTELGKKAKSFMDNGDLV. Residues threonine 31, arginine 36, 57 to 59, 85 to 88, and glutamine 92 contribute to the AMP site; these read DLV and GFPR. An LID region spans residues 126–163; the sequence is GRWICRTCGKTYHEIYNPPKVPGKCDLDGGELYQREDD. Arginine 127 is a binding site for ATP. 2 residues coordinate Zn(2+): cysteine 130 and cysteine 133. 136-137 provides a ligand contact to ATP; that stretch reads TY. Zn(2+) is bound by residues cysteine 150 and aspartate 153. AMP is bound by residues arginine 160 and arginine 171. ATP is bound at residue glutamine 199.

It belongs to the adenylate kinase family. As to quaternary structure, monomer.

It localises to the cytoplasm. It catalyses the reaction AMP + ATP = 2 ADP. It functions in the pathway purine metabolism; AMP biosynthesis via salvage pathway; AMP from ADP: step 1/1. In terms of biological role, catalyzes the reversible transfer of the terminal phosphate group between ATP and AMP. Plays an important role in cellular energy homeostasis and in adenine nucleotide metabolism. The sequence is that of Adenylate kinase from Listeria innocua serovar 6a (strain ATCC BAA-680 / CLIP 11262).